The sequence spans 463 residues: Cysteine--tRNA ligase (463 aa).

A Zn(2+)-binding site is contributed by Cys27. A 'HIGH' region motif is present at residues 29 to 39 (ATVQGLPHIGH). Residues Cys205, His230, and Glu234 each contribute to the Zn(2+) site. A 'KMSKS' region motif is present at residues 261 to 265 (KMSKS). Lys264 is an ATP binding site.

This sequence belongs to the class-I aminoacyl-tRNA synthetase family. In terms of assembly, monomer. The cofactor is Zn(2+).

The protein localises to the cytoplasm. It catalyses the reaction tRNA(Cys) + L-cysteine + ATP = L-cysteinyl-tRNA(Cys) + AMP + diphosphate. This is Cysteine--tRNA ligase from Mycolicibacterium vanbaalenii (strain DSM 7251 / JCM 13017 / BCRC 16820 / KCTC 9966 / NRRL B-24157 / PYR-1) (Mycobacterium vanbaalenii).